The sequence spans 786 residues: Myosin light chain kinase 3 (786 aa).

A Phosphoserine modification is found at Ser155. Disordered stretches follow at residues 233-258 (EALDPGQEPPPTEAESRLPALASEDT), 279-315 (RMSQSAGEGTSSSKPDCSEPGPQPLGPLTTDSDIHSD), and 333-443 (ELFE…GRRV). Polar residues predominate over residues 279-293 (RMSQSAGEGTSSSKP). 2 positions are modified to phosphoserine: Ser341 and Ser422. The Protein kinase domain maps to 482-737 (VSQHEVLGGG…ATQCLKHEWL (256 aa)). ATP contacts are provided by residues 488–496 (LGGGRFGQV) and Lys511. The active-site Proton acceptor is the Asp603.

It belongs to the protein kinase superfamily. CAMK Ser/Thr protein kinase family. The cofactor is Mg(2+). Phosphorylated on serine residues. As to expression, expressed in cardiomyocytes (at protein level). Up-regulated in heart after experimental myocardial infarction at the mRNA level.

Its subcellular location is the cytoplasm. The catalysed reaction is L-seryl-[myosin light chain] + ATP = O-phospho-L-seryl-[myosin light chain] + ADP + H(+). It carries out the reaction L-threonyl-[myosin light chain] + ATP = O-phospho-L-threonyl-[myosin light chain] + ADP + H(+). Its function is as follows. Calmodulin-dependent kinase that phosphorylates MYL2 in vitro. Promotes sarcomere formation in cardiomyocytes. Increases cardiomyocyte contractility. The chain is Myosin light chain kinase 3 (Mylk3) from Rattus norvegicus (Rat).